Reading from the N-terminus, the 412-residue chain is Serine hydroxymethyltransferase (412 aa).

Residues Leu-114 and 118-120 contribute to the (6S)-5,6,7,8-tetrahydrofolate site; that span reads GHL. Lys-223 carries the N6-(pyridoxal phosphate)lysine modification.

It belongs to the SHMT family. As to quaternary structure, homodimer. The cofactor is pyridoxal 5'-phosphate.

The protein localises to the cytoplasm. It carries out the reaction (6R)-5,10-methylene-5,6,7,8-tetrahydrofolate + glycine + H2O = (6S)-5,6,7,8-tetrahydrofolate + L-serine. It participates in one-carbon metabolism; tetrahydrofolate interconversion. It functions in the pathway amino-acid biosynthesis; glycine biosynthesis; glycine from L-serine: step 1/1. In terms of biological role, catalyzes the reversible interconversion of serine and glycine with tetrahydrofolate (THF) serving as the one-carbon carrier. This reaction serves as the major source of one-carbon groups required for the biosynthesis of purines, thymidylate, methionine, and other important biomolecules. Also exhibits THF-independent aldolase activity toward beta-hydroxyamino acids, producing glycine and aldehydes, via a retro-aldol mechanism. The polypeptide is Serine hydroxymethyltransferase (Mesoplasma florum (strain ATCC 33453 / NBRC 100688 / NCTC 11704 / L1) (Acholeplasma florum)).